A 148-amino-acid chain; its full sequence is UPF0251 protein Cbei_2962 (148 aa).

This sequence belongs to the UPF0251 family.

The chain is UPF0251 protein Cbei_2962 from Clostridium beijerinckii (strain ATCC 51743 / NCIMB 8052) (Clostridium acetobutylicum).